A 71-amino-acid polypeptide reads, in one-letter code: Pro-glucagon (71 aa).

This sequence belongs to the glucagon family.

Its subcellular location is the secreted. Functionally, plays a key role in glucose metabolism and homeostasis. Regulates blood glucose by increasing gluconeogenesis and decreasing glycolysis. The sequence is that of Pro-glucagon (gcg) from Piaractus mesopotamicus (Small-scaled pacu).